The primary structure comprises 132 residues: MPTIQQLIRHGRSMKASKTASPALEKCPQKRGVCTRVYTTTPKKPNSALRKVARVRLSNKIEVTAYIPGEGHNLQEHSIVLIRGGRVKDLPGVRYHIVRGSLDTSGVADRKQSRSKYGAKVPKAGAAPAKKK.

A 3-methylthioaspartic acid modification is found at Asp89. Positions 102 to 132 (LDTSGVADRKQSRSKYGAKVPKAGAAPAKKK) are disordered. A compositionally biased stretch (low complexity) spans 118 to 132 (GAKVPKAGAAPAKKK).

The protein belongs to the universal ribosomal protein uS12 family. As to quaternary structure, part of the 30S ribosomal subunit. Contacts proteins S8 and S17. May interact with IF1 in the 30S initiation complex.

In terms of biological role, with S4 and S5 plays an important role in translational accuracy. Its function is as follows. Interacts with and stabilizes bases of the 16S rRNA that are involved in tRNA selection in the A site and with the mRNA backbone. Located at the interface of the 30S and 50S subunits, it traverses the body of the 30S subunit contacting proteins on the other side and probably holding the rRNA structure together. The combined cluster of proteins S8, S12 and S17 appears to hold together the shoulder and platform of the 30S subunit. This Chlorobaculum tepidum (strain ATCC 49652 / DSM 12025 / NBRC 103806 / TLS) (Chlorobium tepidum) protein is Small ribosomal subunit protein uS12.